The following is a 729-amino-acid chain: Cellulose synthase catalytic subunit [UDP-forming] (729 aa).

Transmembrane regions (helical) follow at residues 30–50, 110–130, and 171–191; these read LATWALWLLGALLLVFVVAVP, FILGLGLLGAELYAFVILVLG, and TTVLAASVIDWPAGKITIHLL. Positions 151–244 are catalytic subdomain A; it reads LWPSVDVFIP…YVAIFDCDHI (94 aa). The active site involves Asp193. Positions 240 and 242 each coordinate substrate. The segment at 321–381 is catalytic subdomain B; it reads TALEEVGGVA…AQRIRWARGM (61 aa). The active site involves Asp337. 5 consecutive transmembrane segments (helical) span residues 405–425, 427–447, 520–540, 549–569, and 610–630; these read LNAMLHFFYGVPRIIYLTAPL, YLFFGAHVIQASALMILAYAL, LFLLLLNVVGMVAGVLRLIYV, IWFNLAWTLYNMVLLGATIAT, and MAIMLAQPQPIEPGLPVQIGL. A PilZ domain is found at 575–671; the sequence is QVRSAHRVPL…QERWLVASTF (97 aa).

Belongs to the glycosyltransferase 2 family. Mg(2+) is required as a cofactor.

Its subcellular location is the cell inner membrane. It carries out the reaction [(1-&gt;4)-beta-D-glucosyl](n) + UDP-alpha-D-glucose = [(1-&gt;4)-beta-D-glucosyl](n+1) + UDP + H(+). Its pathway is glycan metabolism; bacterial cellulose biosynthesis. With respect to regulation, activated by bis-(3'-5') cyclic diguanylic acid (c-di-GMP). Catalytic subunit of cellulose synthase. It polymerizes uridine 5'-diphosphate glucose to cellulose, which is produced as an extracellular component for mechanical and chemical protection. In Xanthomonas axonopodis pv. citri (strain 306), this protein is Cellulose synthase catalytic subunit [UDP-forming] (bcsA).